Consider the following 361-residue polypeptide: Large ribosomal subunit protein mL45 (361 aa).

Residues 319–361 are disordered; sequence EPPKELSAGDAEVKQVDSVGEQSKEQLPLATPVESHTKPSLAI.

The protein belongs to the mitochondrion-specific ribosomal protein mL45 family.

Its subcellular location is the mitochondrion. In Drosophila melanogaster (Fruit fly), this protein is Large ribosomal subunit protein mL45 (mRpL45).